Here is a 457-residue protein sequence, read N- to C-terminus: MALWGGRFSQAADQRFKQFNDSLRFDYRLAEQDIVGSIGWSKALVTVNVLSEQEQQQLEQALDALLVEVQADPEMILQSDAEDIHSWVELRLIEKVGDLGKKLHTGRSRNDQVATDLKLWCKAQIAELLLSVRQLRQALVTTAEANQDAVMPGYTHLQRAQPVTFAHWCLAYHEMLTRDESRLEDTLKRLDVSPLGCGALAGTAYPIDREQLADWLGFASATRNSLDTVSDRDHVLELLSNASIGMVHLSRFAEDLIFFNSGEAAFVELSDRVTSGSSLMPQKKNPDALELIRGKCGRVQGALTGMMMTLKGLPLAYNKDMQEDKEGLFDALDTWHDCLMMAGLVLEGIQVKRPRCKEAAEQGYANSTELADYLVAKGVPFREAHHIVGEAVVEAIRQGKALEALPLADLQKFSAVIGDDVYPILALQSCLDKRAAQGGVSPQQVAKAISDAKQRLA.

Belongs to the lyase 1 family. Argininosuccinate lyase subfamily.

It is found in the cytoplasm. The enzyme catalyses 2-(N(omega)-L-arginino)succinate = fumarate + L-arginine. It participates in amino-acid biosynthesis; L-arginine biosynthesis; L-arginine from L-ornithine and carbamoyl phosphate: step 3/3. The protein is Argininosuccinate lyase of Pectobacterium atrosepticum (strain SCRI 1043 / ATCC BAA-672) (Erwinia carotovora subsp. atroseptica).